The sequence spans 142 residues: Small ribosomal subunit protein eS6 (142 aa).

Residues 117 to 142 form a disordered region; sequence EKPLDELAPKKEKKEGAAGGRAPAKK. Positions 118 to 132 are enriched in basic and acidic residues; it reads KPLDELAPKKEKKEG.

It belongs to the eukaryotic ribosomal protein eS6 family.

In Methanocella arvoryzae (strain DSM 22066 / NBRC 105507 / MRE50), this protein is Small ribosomal subunit protein eS6.